The following is a 235-amino-acid chain: UPF0714 protein YmaC (235 aa).

Residues 5–24 form a helical membrane-spanning segment; that stretch reads LLNVILVLAIVLFLRYVHYS.

Belongs to the UPF0714 family.

The protein localises to the cell membrane. In Bacillus subtilis (strain 168), this protein is UPF0714 protein YmaC (ymaC).